Reading from the N-terminus, the 358-residue chain is Ion-translocating oxidoreductase complex subunit D (358 aa).

Helical transmembrane passes span 24 to 44 (ILAM…GVVL), 79 to 99 (LTAL…IIII), and 125 to 145 (IGYV…MPPI). Residue threonine 186 is modified to FMN phosphoryl threonine. The next 5 membrane-spanning stretches (helical) occupy residues 220 to 240 (FAQG…FLIL), 248 to 268 (IPVA…FTGF), 271 to 291 (LSAI…FIAT), 297 to 317 (SITP…VYLI), and 321 to 341 (GNYP…VPLI).

Belongs to the NqrB/RnfD family. The complex is composed of six subunits: RnfA, RnfB, RnfC, RnfD, RnfE and RnfG. FMN serves as cofactor.

It is found in the cell inner membrane. Part of a membrane-bound complex that couples electron transfer with translocation of ions across the membrane. This Haemophilus influenzae (strain ATCC 51907 / DSM 11121 / KW20 / Rd) protein is Ion-translocating oxidoreductase complex subunit D.